A 122-amino-acid polypeptide reads, in one-letter code: uncharacterized protein (122 aa).

The first 22 residues, 1 to 22, serve as a signal peptide directing secretion; sequence MNMMRIFYIGLSGVGMMFSSMA.

This is an uncharacterized protein from Escherichia coli (strain K12).